The sequence spans 106 residues: UPF0145 protein VC_A0951 (106 aa).

It belongs to the UPF0145 family.

This chain is UPF0145 protein VC_A0951, found in Vibrio cholerae serotype O1 (strain ATCC 39315 / El Tor Inaba N16961).